We begin with the raw amino-acid sequence, 234 residues long: Ras-related protein Rab-20 (234 aa).

The GTP site is built by G17, K18, T19, D32, and T36. T19 serves as a coordination point for Mg(2+). 2 consecutive short sequence motifs (switch) follow at residues 28–41 (RRFP…GGAF) and 55–72 (DTAG…YCRG). Residues T36 and D55 each coordinate Mg(2+). Residues G58, N113, K114, and D116 each coordinate GTP. Positions 125–144 (GQEKEECSPNMDAGDRVSPR) are disordered. Basic and acidic residues predominate over residues 126–142 (QEKEECSPNMDAGDRVS). GTP contacts are provided by A184 and K185. A disordered region spans residues 212–234 (RPSHTVDISSHKPPKRTRSGCCA). Over residues 223–234 (KPPKRTRSGCCA) the composition is skewed to basic residues. 2 S-geranylgeranyl cysteine lipidation sites follow: C232 and C233.

This sequence belongs to the small GTPase superfamily. Rab family. Mg(2+) is required as a cofactor. In terms of tissue distribution, low or absent expression in normal pancreas and stronger expression in 15 of 18 exocrine pancreatic adenocarcinomas (at protein level).

Its subcellular location is the golgi apparatus. It localises to the cytoplasmic vesicle. It is found in the phagosome. The protein localises to the phagosome membrane. It carries out the reaction GTP + H2O = GDP + phosphate + H(+). With respect to regulation, regulated by guanine nucleotide exchange factors (GEFs) which promote the exchange of bound GDP for free GTP. Regulated by GTPase activating proteins (GAPs) which increase the GTP hydrolysis activity. Inhibited by GDP dissociation inhibitors (GDIs). Functionally, the small GTPases Rab are key regulators of intracellular membrane trafficking, from the formation of transport vesicles to their fusion with membranes. Rabs cycle between an inactive GDP-bound form and an active GTP-bound form that is able to recruit to membranes different sets of downstream effectors directly responsible for vesicle formation, movement, tethering and fusion. RAB20 plays a role in apical endocytosis/recycling. Plays a role in the maturation and acidification of phagosomes that engulf pathogens, such as S.aureus and M.tuberculosis. Plays a role in the fusion of phagosomes with lysosomes. This Homo sapiens (Human) protein is Ras-related protein Rab-20.